The sequence spans 208 residues: Phosphoheptose isomerase (208 aa).

An SIS domain is found at 38–200 (MALTLARGRK…LFENVLALQP (163 aa)). A substrate-binding site is contributed by 53-55 (NGG). 2 residues coordinate Zn(2+): histidine 62 and glutamate 66. Substrate is bound by residues glutamate 66, 95-96 (ND), 121-123 (STS), serine 126, and glutamine 173. Positions 173 and 181 each coordinate Zn(2+).

This sequence belongs to the SIS family. GmhA subfamily. In terms of assembly, homotetramer. It depends on Zn(2+) as a cofactor.

It localises to the cytoplasm. It catalyses the reaction 2 D-sedoheptulose 7-phosphate = D-glycero-alpha-D-manno-heptose 7-phosphate + D-glycero-beta-D-manno-heptose 7-phosphate. It participates in carbohydrate biosynthesis; D-glycero-D-manno-heptose 7-phosphate biosynthesis; D-glycero-alpha-D-manno-heptose 7-phosphate and D-glycero-beta-D-manno-heptose 7-phosphate from sedoheptulose 7-phosphate: step 1/1. Functionally, catalyzes the isomerization of sedoheptulose 7-phosphate in D-glycero-D-manno-heptose 7-phosphate. This chain is Phosphoheptose isomerase, found in Nitratidesulfovibrio vulgaris (strain DSM 19637 / Miyazaki F) (Desulfovibrio vulgaris).